Consider the following 203-residue polypeptide: Bone marrow stromal antigen 2 (203 aa).

The Cytoplasmic segment spans residues 1-26; it reads MAPTFYHYHPLPMDQKEPGCGIRWRC. A helical; Signal-anchor for type II membrane protein membrane pass occupies residues 27–47; sequence LAAASVLILVALVIPLIIFAV. The Extracellular portion of the chain corresponds to 48–183; that stretch reads KANSEACRDG…EASITSKQNS (136 aa). N-linked (GlcNAc...) asparagine glycans are attached at residues Asn-66 and Asn-93. The stretch at 66-178 forms a coiled coil; the sequence is NTTRLLQRQL…LRTAEEASIT (113 aa). A lipid anchor (GPI-anchor amidated serine) is attached at Ser-183. The propeptide at 184 to 203 is removed in mature form; it reads AGSMAVSSLLVLAVPLFLLF.

Parallel homodimer; disulfide-linked. May form homotetramers under reducing conditions. Isoform 1 and isoform 2 form homodimers and also heterodimers with each other. Dimerization is essential for its antiviral activity. Interacts (via cytoplasmic domain) with ARHGAP44. Interacts with MMP14 (via C-terminal cytoplasmic tail). Interacts with LILRA4/ILT7. Interacts with RNF115. Post-translationally, the GPI anchor is essential for its antiviral activity.

It localises to the golgi apparatus. It is found in the trans-Golgi network. Its subcellular location is the cell membrane. The protein localises to the late endosome. The protein resides in the membrane raft. It localises to the cytoplasm. It is found in the apical cell membrane. In terms of biological role, IFN-induced antiviral host restriction factor which efficiently blocks the release of diverse mammalian enveloped viruses by directly tethering nascent virions to the membranes of infected cells. Acts as a direct physical tether, holding virions to the cell membrane and linking virions to each other. The tethered virions can be internalized by endocytosis and subsequently degraded or they can remain on the cell surface. In either case, their spread as cell-free virions is restricted. Its target viruses belong to diverse families, including retroviridae: human immunodeficiency virus type 1 (HIV-1), mouse mammary tumor virus (MMTV) and murine leukemia virus (MLV), filoviridae: ebola virus (EBOV), arenaviridae: lassa virus (LASV), and rhabdoviridae: vesicular stomatitis virus (VSV). Can inhibit cell surface proteolytic activity of MMP14 causing decreased activation of MMP15 which results in inhibition of cell growth and migration. Can stimulate signaling by LILRA4/ILT7 and consequently provide negative feedback to the production of IFN by plasmacytoid dendritic cells in response to viral infection. Plays a role in the organization of the subapical actin cytoskeleton in polarized epithelial cells. The chain is Bone marrow stromal antigen 2 (Bst2) from Cricetulus griseus (Chinese hamster).